Reading from the N-terminus, the 118-residue chain is Iron-sulfur cluster insertion protein ErpA (118 aa).

The iron-sulfur cluster site is built by C46, C110, and C112.

This sequence belongs to the HesB/IscA family. As to quaternary structure, homodimer. Iron-sulfur cluster is required as a cofactor.

In terms of biological role, required for insertion of 4Fe-4S clusters for at least IspG. In Psychromonas ingrahamii (strain DSM 17664 / CCUG 51855 / 37), this protein is Iron-sulfur cluster insertion protein ErpA.